We begin with the raw amino-acid sequence, 89 residues long: Small ribosomal subunit protein uS17 (89 aa).

Belongs to the universal ribosomal protein uS17 family. In terms of assembly, part of the 30S ribosomal subunit.

Functionally, one of the primary rRNA binding proteins, it binds specifically to the 5'-end of 16S ribosomal RNA. This Chlorobaculum tepidum (strain ATCC 49652 / DSM 12025 / NBRC 103806 / TLS) (Chlorobium tepidum) protein is Small ribosomal subunit protein uS17.